The primary structure comprises 293 residues: 4-diphosphocytidyl-2-C-methyl-D-erythritol kinase (293 aa).

The active site involves lysine 10. 94 to 104 (PVSAGLAGGSS) serves as a coordination point for ATP. Residue aspartate 136 is part of the active site.

The protein belongs to the GHMP kinase family. IspE subfamily.

It carries out the reaction 4-CDP-2-C-methyl-D-erythritol + ATP = 4-CDP-2-C-methyl-D-erythritol 2-phosphate + ADP + H(+). Its pathway is isoprenoid biosynthesis; isopentenyl diphosphate biosynthesis via DXP pathway; isopentenyl diphosphate from 1-deoxy-D-xylulose 5-phosphate: step 3/6. Its function is as follows. Catalyzes the phosphorylation of the position 2 hydroxy group of 4-diphosphocytidyl-2C-methyl-D-erythritol. This chain is 4-diphosphocytidyl-2-C-methyl-D-erythritol kinase, found in Listeria monocytogenes serotype 4b (strain CLIP80459).